Here is a 431-residue protein sequence, read N- to C-terminus: MTQTTASVNTQSLGELDPELAAAMAGELARERDTLEMIASENFVPRAVLQAQGSVLTNKYAEGYPGRRYYGGCENVDVVENLARERAKELFGAEFANVQPHSGAQANAAVLMSLMDPGDRLLGLDLAHGGHLTHGMRLNFSGKLYEVHSYGVSKEDHRVDMDEVRTIALGAKPKVIVAGWSAYPRHQDFAAFRAIADEVGAYLWVDMAHFAGLVAAGLHPSPVPYADVVSSTVHKTLGGPRSGLILAKQEFAKKINSAVFPGQQGGPLMHAIAAKAVAFKIAGTEEFRDRQQRTLSGAKILAERLTGADVADKGISVLTGGTDVHLVLVDLRNSQLDGQQGEDLLHEIGITVNRNAVPFDPRPPMVTSGLRIGTAALATRGFGDAEFTEVADIIATALAGGSDAETLRGRVRALAQRVPLYQGLEDWHLLG.

Residues Leu-126 and 130-132 contribute to the (6S)-5,6,7,8-tetrahydrofolate site; that span reads GHL. Lys-235 carries the post-translational modification N6-(pyridoxal phosphate)lysine.

Belongs to the SHMT family. As to quaternary structure, homodimer. The cofactor is pyridoxal 5'-phosphate.

It localises to the cytoplasm. It carries out the reaction (6R)-5,10-methylene-5,6,7,8-tetrahydrofolate + glycine + H2O = (6S)-5,6,7,8-tetrahydrofolate + L-serine. Its pathway is one-carbon metabolism; tetrahydrofolate interconversion. It functions in the pathway amino-acid biosynthesis; glycine biosynthesis; glycine from L-serine: step 1/1. Functionally, catalyzes the reversible interconversion of serine and glycine with tetrahydrofolate (THF) serving as the one-carbon carrier. This reaction serves as the major source of one-carbon groups required for the biosynthesis of purines, thymidylate, methionine, and other important biomolecules. Also exhibits THF-independent aldolase activity toward beta-hydroxyamino acids, producing glycine and aldehydes, via a retro-aldol mechanism. This Nocardia farcinica (strain IFM 10152) protein is Serine hydroxymethyltransferase.